The primary structure comprises 70 residues: Turripeptide OL179 (70 aa).

Positions 1 to 21 (MMAKQVVVLLALLLLLPIVTA) are cleaved as a signal peptide. A propeptide spanning residues 22-32 (SMGDASGRTGR) is cleaved from the precursor.

As to expression, expressed by the venom duct.

The protein localises to the secreted. Its function is as follows. Acts as a neurotoxin by inhibiting an ion channel. In Iotyrris olangoensis (Sea snail), this protein is Turripeptide OL179.